The sequence spans 671 residues: DNA ligase (671 aa).

Residues 37-41 (DIEYD), 86-87 (SL), and Glu117 contribute to the NAD(+) site. The N6-AMP-lysine intermediate role is filled by Lys119. The NAD(+) site is built by Arg140, Glu177, Lys295, and Lys319. Residues Cys413, Cys416, Cys431, and Cys437 each contribute to the Zn(2+) site. The region spanning 594-671 (IISAAVFGKT…DEEEMLNLLK (78 aa)) is the BRCT domain.

This sequence belongs to the NAD-dependent DNA ligase family. LigA subfamily. Mg(2+) is required as a cofactor. It depends on Mn(2+) as a cofactor.

The enzyme catalyses NAD(+) + (deoxyribonucleotide)n-3'-hydroxyl + 5'-phospho-(deoxyribonucleotide)m = (deoxyribonucleotide)n+m + AMP + beta-nicotinamide D-nucleotide.. In terms of biological role, DNA ligase that catalyzes the formation of phosphodiester linkages between 5'-phosphoryl and 3'-hydroxyl groups in double-stranded DNA using NAD as a coenzyme and as the energy source for the reaction. It is essential for DNA replication and repair of damaged DNA. This Polynucleobacter asymbioticus (strain DSM 18221 / CIP 109841 / QLW-P1DMWA-1) (Polynucleobacter necessarius subsp. asymbioticus) protein is DNA ligase.